The following is a 408-amino-acid chain: Acetate kinase (408 aa).

Asn7 lines the Mg(2+) pocket. Lys14 is a binding site for ATP. Arg91 serves as a coordination point for substrate. Asp148 serves as the catalytic Proton donor/acceptor. Residues 208 to 212, 283 to 285, and 331 to 335 contribute to the ATP site; these read HLGNG, DFR, and GIGEN. Glu384 provides a ligand contact to Mg(2+).

It belongs to the acetokinase family. In terms of assembly, homodimer. Mg(2+) is required as a cofactor. Requires Mn(2+) as cofactor.

Its subcellular location is the cytoplasm. It carries out the reaction acetate + ATP = acetyl phosphate + ADP. The protein operates within metabolic intermediate biosynthesis; acetyl-CoA biosynthesis; acetyl-CoA from acetate: step 1/2. In terms of biological role, catalyzes the formation of acetyl phosphate from acetate and ATP. Can also catalyze the reverse reaction. The sequence is that of Acetate kinase from Methanosarcina mazei (Methanosarcina frisia).